The following is a 350-amino-acid chain: Chorismate synthase (350 aa).

Positions 39 and 45 each coordinate NADP(+). FMN-binding positions include 119–121 (RSS), 213–214 (QA), Gly-258, 273–277 (KPIPT), and Arg-299.

Belongs to the chorismate synthase family. As to quaternary structure, homotetramer. The cofactor is FMNH2.

The enzyme catalyses 5-O-(1-carboxyvinyl)-3-phosphoshikimate = chorismate + phosphate. It functions in the pathway metabolic intermediate biosynthesis; chorismate biosynthesis; chorismate from D-erythrose 4-phosphate and phosphoenolpyruvate: step 7/7. In terms of biological role, catalyzes the anti-1,4-elimination of the C-3 phosphate and the C-6 proR hydrogen from 5-enolpyruvylshikimate-3-phosphate (EPSP) to yield chorismate, which is the branch point compound that serves as the starting substrate for the three terminal pathways of aromatic amino acid biosynthesis. This reaction introduces a second double bond into the aromatic ring system. This Thermoanaerobacter pseudethanolicus (strain ATCC 33223 / 39E) (Clostridium thermohydrosulfuricum) protein is Chorismate synthase.